Here is a 272-residue protein sequence, read N- to C-terminus: Probable ribosomal RNA small subunit methyltransferase A (272 aa).

The S-adenosyl-L-methionine site is built by Asn-23, Leu-25, Gly-50, Glu-71, Asp-95, and Asn-110.

This sequence belongs to the class I-like SAM-binding methyltransferase superfamily. rRNA adenine N(6)-methyltransferase family. RsmA subfamily.

The protein resides in the cytoplasm. In terms of biological role, specifically dimethylates two adjacent adenosines in the loop of a conserved hairpin near the 3'-end of 16S rRNA in the 30S particle. May play a critical role in biogenesis of 30S subunits. The sequence is that of Probable ribosomal RNA small subunit methyltransferase A from Thermococcus onnurineus (strain NA1).